The chain runs to 350 residues: Protein CONSERVED ONLY IN THE GREEN LINEAGE 160, chloroplastic (350 aa).

The transit peptide at 1-46 (MAILSYISATSTTPPIPQDQSPNSRLPTKIILPNKKPEKWSTGVAP) directs the protein to the chloroplast. Polar residues predominate over residues 7-26 (ISATSTTPPIPQDQSPNSRL). Residues 7–58 (ISATSTTPPIPQDQSPNSRLPTKIILPNKKPEKWSTGVAPGEYGGPPTTTKL) form a disordered region. A Phosphoserine modification is found at Ser117. Transmembrane regions (helical) follow at residues 213–233 (KNKI…SAYI), 239–259 (IALS…MLGN), 276–296 (ANQP…RWNA), and 304–324 (FMHL…IATF).

It is found in the plastid. The protein resides in the chloroplast thylakoid membrane. Its function is as follows. Facilitates the assembly of the membrane proton channel of the chloroplastic F-type ATPase. Specifically required for the efficient assembly and integration of the CF(0) subunit c into the chloroplastic ATPase complex in the thylakoid membrane. This chain is Protein CONSERVED ONLY IN THE GREEN LINEAGE 160, chloroplastic, found in Arabidopsis thaliana (Mouse-ear cress).